The chain runs to 144 residues: Transcriptional regulator SlyA (144 aa).

One can recognise an HTH marR-type domain in the interval 2 to 135 (ESPLGSDLAR…LSNMIAKLEK (134 aa)). Positions 49-72 (QIQLAKAIGIEQPSLVRTLDQLEE) form a DNA-binding region, H-T-H motif.

Belongs to the SlyA family. In terms of assembly, homodimer.

Functionally, transcription regulator that can specifically activate or repress expression of target genes. This chain is Transcriptional regulator SlyA, found in Sodalis glossinidius (strain morsitans).